Consider the following 177-residue polypeptide: Large ribosomal subunit protein uL6 (177 aa).

The protein belongs to the universal ribosomal protein uL6 family. In terms of assembly, part of the 50S ribosomal subunit.

This protein binds to the 23S rRNA, and is important in its secondary structure. It is located near the subunit interface in the base of the L7/L12 stalk, and near the tRNA binding site of the peptidyltransferase center. The protein is Large ribosomal subunit protein uL6 of Laribacter hongkongensis (strain HLHK9).